The primary structure comprises 530 residues: Growth-regulating factor 1 (530 aa).

Residues 1–41 (MDLGVRVSGHETVSSPGQTELGSGFSNKQERSGFDGEDCWR) form a disordered region. Residues 11-27 (ETVSSPGQTELGSGFSN) are compositionally biased toward polar residues. A compositionally biased stretch (basic and acidic residues) spans 28-41 (KQERSGFDGEDCWR). The 36-residue stretch at 133-168 (PFSLTQWAELEQQALIYKYITANVPVPSSLLLSLKK) folds into the QLQ domain. One can recognise a WRC domain in the interval 196-240 (DPEPGRCRRTDGKKWRCSRDAVPDQKYCERHINRGRHRSRKPVEG). 2 consecutive short sequence motifs (bipartite nuclear localization signal) follow at residues 201–211 (RCRRTDGKKWR) and 229–236 (RGRHRSRK). 2 disordered regions span residues 223–250 (CERHINRGRHRSRKPVEGQNGHNTNAAA) and 485–530 (STFG…APSL). A compositionally biased stretch (low complexity) spans 485 to 508 (STFGSLSNSSSASSTIIGDNNNKN). Over residues 519-530 (TLMNTSATAPSL) the composition is skewed to polar residues.

It belongs to the GRF family. In terms of assembly, interacts with GIF1 and GIF2. In terms of tissue distribution, strongly expressed in actively growing and developing tissues, such as roots, upper stems, and shoot tips containing the shoot apical meristem (SAM) and flower buds. Also expressed in mature flowers, but weakly expressed in mature stems and leaves.

The protein resides in the nucleus. Functionally, transcription activator that plays a role in the regulation of cell expansion in leaf and cotyledons tissues. Component of a network formed by miR396, the GRFs and their interacting factors (GIFs) acting in the regulation of meristem function, at least partially through the control of cell proliferation. microRNA396-GRF1/GRF3 regulatory module acts as a developmental regulator in the reprogramming of root cells during cyst nematode infection, leading to the formation of the syncytium. The protein is Growth-regulating factor 1 (GRF1) of Arabidopsis thaliana (Mouse-ear cress).